Reading from the N-terminus, the 209-residue chain is Small ribosomal subunit protein uS3 (209 aa).

Residues 38-107 form the KH type-2 domain; that stretch reads IRKVIKNKYA…RFIVNVEEIK (70 aa).

Belongs to the universal ribosomal protein uS3 family. Part of the 30S ribosomal subunit. Forms a tight complex with proteins S10 and S14.

Its function is as follows. Binds the lower part of the 30S subunit head. Binds mRNA in the 70S ribosome, positioning it for translation. This is Small ribosomal subunit protein uS3 from Thermosipho africanus (strain TCF52B).